Reading from the N-terminus, the 270-residue chain is 3-methyl-2-oxobutanoate hydroxymethyltransferase (270 aa).

Mg(2+) contacts are provided by Asp-50 and Asp-89. 3-methyl-2-oxobutanoate is bound by residues Asp-50–Ser-51, Asp-89, and Lys-118. Glu-120 contacts Mg(2+). Glu-187 serves as the catalytic Proton acceptor.

The protein belongs to the PanB family. As to quaternary structure, homodecamer; pentamer of dimers. Mg(2+) is required as a cofactor.

The protein resides in the cytoplasm. It catalyses the reaction 3-methyl-2-oxobutanoate + (6R)-5,10-methylene-5,6,7,8-tetrahydrofolate + H2O = 2-dehydropantoate + (6S)-5,6,7,8-tetrahydrofolate. The protein operates within cofactor biosynthesis; (R)-pantothenate biosynthesis; (R)-pantoate from 3-methyl-2-oxobutanoate: step 1/2. Catalyzes the reversible reaction in which hydroxymethyl group from 5,10-methylenetetrahydrofolate is transferred onto alpha-ketoisovalerate to form ketopantoate. This is 3-methyl-2-oxobutanoate hydroxymethyltransferase from Helicobacter pylori (strain G27).